The chain runs to 289 residues: MVVKRAEVLGYCSGVRRAVDTVLKLAKENTENKSGLYTFGPLIHNPSTMLRLKQMGVRTIDTENFTEDEDYKDSVIVIRAHGIPPSKKSELEKSGAKVIDATCSRVKASQALAKKHSEEAFVILAGDKNHGELISIAGYAEGKCLIVQNAEEAALIDLPSSLSANGSAVLIAQTTIKESEYEAIASALKKRISDLKVFNTICPATSDRQAALKKLAYEVDALLVIGGKNSANTKRLFQTAVDTKKPAWLIEDASEIPKEIFSYSVIGLTAGASTPDFIIDEVEKKLLEG.

Residue C12 coordinates [4Fe-4S] cluster. H44 and H81 together coordinate (2E)-4-hydroxy-3-methylbut-2-enyl diphosphate. The dimethylallyl diphosphate site is built by H44 and H81. The isopentenyl diphosphate site is built by H44 and H81. Residue C103 participates in [4Fe-4S] cluster binding. (2E)-4-hydroxy-3-methylbut-2-enyl diphosphate is bound at residue H130. H130 lines the dimethylallyl diphosphate pocket. Position 130 (H130) interacts with isopentenyl diphosphate. E132 acts as the Proton donor in catalysis. (2E)-4-hydroxy-3-methylbut-2-enyl diphosphate is bound at residue T174. A [4Fe-4S] cluster-binding site is contributed by C202. Residues S230, N232, and S273 each coordinate (2E)-4-hydroxy-3-methylbut-2-enyl diphosphate. The dimethylallyl diphosphate site is built by S230, N232, and S273. Residues S230, N232, and S273 each contribute to the isopentenyl diphosphate site.

It belongs to the IspH family. [4Fe-4S] cluster is required as a cofactor.

The catalysed reaction is isopentenyl diphosphate + 2 oxidized [2Fe-2S]-[ferredoxin] + H2O = (2E)-4-hydroxy-3-methylbut-2-enyl diphosphate + 2 reduced [2Fe-2S]-[ferredoxin] + 2 H(+). It carries out the reaction dimethylallyl diphosphate + 2 oxidized [2Fe-2S]-[ferredoxin] + H2O = (2E)-4-hydroxy-3-methylbut-2-enyl diphosphate + 2 reduced [2Fe-2S]-[ferredoxin] + 2 H(+). It participates in isoprenoid biosynthesis; dimethylallyl diphosphate biosynthesis; dimethylallyl diphosphate from (2E)-4-hydroxy-3-methylbutenyl diphosphate: step 1/1. It functions in the pathway isoprenoid biosynthesis; isopentenyl diphosphate biosynthesis via DXP pathway; isopentenyl diphosphate from 1-deoxy-D-xylulose 5-phosphate: step 6/6. Functionally, catalyzes the conversion of 1-hydroxy-2-methyl-2-(E)-butenyl 4-diphosphate (HMBPP) into a mixture of isopentenyl diphosphate (IPP) and dimethylallyl diphosphate (DMAPP). Acts in the terminal step of the DOXP/MEP pathway for isoprenoid precursor biosynthesis. The polypeptide is 4-hydroxy-3-methylbut-2-enyl diphosphate reductase (Treponema denticola (strain ATCC 35405 / DSM 14222 / CIP 103919 / JCM 8153 / KCTC 15104)).